The chain runs to 462 residues: A-type ATP synthase subunit B (462 aa).

It belongs to the ATPase alpha/beta chains family. In terms of assembly, has multiple subunits with at least A(3), B(3), C, D, E, F, H, I and proteolipid K(x).

It localises to the cell membrane. Functionally, component of the A-type ATP synthase that produces ATP from ADP in the presence of a proton gradient across the membrane. The B chain is a regulatory subunit. The protein is A-type ATP synthase subunit B of Methanococcus maripaludis (strain C6 / ATCC BAA-1332).